A 310-amino-acid polypeptide reads, in one-letter code: Olfactory receptor 4C16 (310 aa).

Residues 1 to 23 (MQLNNNVTEFILLGLTQDPFWKK) lie on the Extracellular side of the membrane. Asn6 is a glycosylation site (N-linked (GlcNAc...) asparagine). A helical transmembrane segment spans residues 24 to 47 (IVFVIFLRLYLGTLLGNLLIIISV). At 48 to 55 (KTSQALKN) the chain is on the cytoplasmic side. The chain crosses the membrane as a helical span at residues 56 to 77 (PMFFFLFYLSLSDTCLSTSITP). At 78–98 (RMIVDALLKKTTISFSECMIQ) the chain is on the extracellular side. Residues Cys95 and Cys187 are joined by a disulfide bond. Residues 99–118 (VFSSHVFGCLEIFILILTAV) form a helical membrane-spanning segment. Residues 119–137 (DRYVDICKPLHYMTIISQW) are Cytoplasmic-facing. The chain crosses the membrane as a helical span at residues 138 to 156 (VCGVLMAVAWVGSCVHSLV). Residues 157-193 (QIFLALSLPFCGPNVINHCFCDLQPLLKQACSETYVV) lie on the Extracellular side of the membrane. The helical transmembrane segment at 194–217 (NLLLVSNSGAICAVSYVMLIFSYV) threads the bilayer. The Cytoplasmic segment spans residues 218–233 (IFLHSLRNHSAEVIKK). The helical transmembrane segment at 234–256 (ALSTCVSHIIVVILFFGPCIFMY) threads the bilayer. Topologically, residues 257 to 267 (TCLATVFPMDK) are extracellular. A helical transmembrane segment spans residues 268–287 (MIAVFYTVGTSFLNPVIYTL). Residues 288–310 (KNTEVKSAMRKLWSKKLITDDKR) lie on the Cytoplasmic side of the membrane.

The protein belongs to the G-protein coupled receptor 1 family.

The protein localises to the cell membrane. Functionally, odorant receptor. This is Olfactory receptor 4C16 (OR4C16) from Homo sapiens (Human).